A 257-amino-acid chain; its full sequence is Neurotrophin-3 (257 aa).

Residues Met-1–Ser-18 form the signal peptide. Residues Thr-19–Arg-138 constitute a propeptide that is removed on maturation. Asn-131 carries an N-linked (GlcNAc...) asparagine glycan. 3 cysteine pairs are disulfide-bonded: Cys-152–Cys-217, Cys-195–Cys-246, and Cys-205–Cys-248.

Belongs to the NGF-beta family. In terms of tissue distribution, in the embryo, the expression peak at E4.5 and decreases at later stages of development.

The protein localises to the secreted. Its function is as follows. Seems to promote the survival of visceral and proprioceptive sensory neurons. This is Neurotrophin-3 (NTF3) from Gallus gallus (Chicken).